We begin with the raw amino-acid sequence, 491 residues long: Glutamyl-tRNA(Gln) amidotransferase subunit A (491 aa).

Residues Lys-77 and Ser-152 each act as charge relay system in the active site. Ser-176 (acyl-ester intermediate) is an active-site residue.

It belongs to the amidase family. GatA subfamily. Heterotrimer of A, B and C subunits.

The enzyme catalyses L-glutamyl-tRNA(Gln) + L-glutamine + ATP + H2O = L-glutaminyl-tRNA(Gln) + L-glutamate + ADP + phosphate + H(+). Functionally, allows the formation of correctly charged Gln-tRNA(Gln) through the transamidation of misacylated Glu-tRNA(Gln) in organisms which lack glutaminyl-tRNA synthetase. The reaction takes place in the presence of glutamine and ATP through an activated gamma-phospho-Glu-tRNA(Gln). This is Glutamyl-tRNA(Gln) amidotransferase subunit A (gatA) from Chlamydia muridarum (strain MoPn / Nigg).